The following is a 68-amino-acid chain: Alpha/kappa-conotoxin-like pl14.2 (68 aa).

The N-terminal stretch at 1–27 (MPSVRSVTCCCLLWMMFSVQLVTPGSP) is a signal peptide. A propeptide spanning residues 28 to 39 (ATAQLSGQRTAR) is cleaved from the precursor. Disulfide bonds link Cys46-Cys61 and Cys50-Cys63. Residue Arg64 is modified to Arginine amide. Residues 65 to 68 (GKRD) constitute a propeptide that is removed on maturation.

This sequence belongs to the conotoxin J superfamily. In terms of tissue distribution, expressed by the venom duct.

It localises to the secreted. Functionally, highly inhibits both nicotinic acetylcholine receptors (neuronal (alpha-3/beta-4) and muscular (alpha-1/beta-1/epsilon/delta) subtypes) and the voltage-gated potassium channel Kv1.6/KCNA6 subtype. In Conus planorbis (Planorbis cone), this protein is Alpha/kappa-conotoxin-like pl14.2.